Reading from the N-terminus, the 298-residue chain is tRNA-uridine aminocarboxypropyltransferase 2 (298 aa).

N-acetylmethionine is present on M1. Residues 1-10 show a composition bias toward basic and acidic residues; that stretch reads MEPQAEERTL. The interval 1–55 is disordered; that stretch reads MEPQAEERTLGEPAPPPSGALASPTPDEEERTEGGAPPTATPAGASGDSTSADGL. The span at 34–45 shows a compositional bias: low complexity; the sequence is GGAPPTATPAGA. S132 carries the post-translational modification Phosphoserine. The short motif at 178–181 is the DXTW element; it reads DGTW.

Belongs to the TDD superfamily. DTWD2 family.

Its subcellular location is the nucleus. It localises to the cytoplasm. It catalyses the reaction a uridine in tRNA + S-adenosyl-L-methionine = a 3-[(3S)-3-amino-3-carboxypropyl]uridine in tRNA + S-methyl-5'-thioadenosine + H(+). Its function is as follows. Catalyzes the formation of 3-(3-amino-3-carboxypropyl)uridine (acp3U) at position 20a in the D-loop of several cytoplasmic tRNAs (acp3U(20a)). Also has a weak activity to form acp3U at position 20 in the D-loop of tRNAs (acp3U(20)). Involved in glycoRNA biosynthesis by mediating formation of acp3U, which acts as an attachment site for N-glycans on tRNAs. GlycoRNAs consist of RNAs modified with secretory N-glycans that are presented on the cell surface. The sequence is that of tRNA-uridine aminocarboxypropyltransferase 2 from Mus musculus (Mouse).